A 476-amino-acid polypeptide reads, in one-letter code: MPMKIENGPFWKRVEENLQNDFMRGAVAGMQDRGYVRRLGVIEELGHWEEWRSLAEQIRKHTLENLDYYLMQLSENVAKRGGHVFFAQTAEEANDYIRRIALEKQAKKIVKSKSMVTEEINLNPVLEAIGCDVVETDLGEYILQIDDHDPPSHIVGPALHKNKEQIRDVFHRKLGYNKSSDPVELARHARETLRRDYLTADIGITGCNFAIAESGSITLVTNEGNADLVTSLPKTQITVMGMERIVPTFKEMEVLVSMLTRSAVGQKLTSYITVLTGPREQGDADGPEEFHLVIVDNGRSSILGTEFQPVLQCIRCAACVNVCPVYRHIGGHSYGSIYSGPIGAVLSPLLGGYDDYKELPYASSLCAACTEVCPVKIPLHELLIKHRQIIVEREGKAPVAEKLAMKAFRLGTASPSLYRFGTKLAPSAFAPFAEDGRITKGPGPLKAWTESRVFPAPNNERFRDWFRNRQKGGNPS.

4Fe-4S ferredoxin-type domains are found at residues 304–334 (GTEF…GHSY) and 353–382 (YDDY…LHEL). Cys-313, Cys-316, Cys-319, Cys-323, Cys-366, Cys-369, and Cys-373 together coordinate [4Fe-4S] cluster.

Belongs to the LutB/YkgF family.

In terms of biological role, is involved in L-lactate degradation and allows cells to grow with lactate as the sole carbon source. Has probably a role as an electron transporter during oxidation of L-lactate. The chain is Lactate utilization protein B from Geobacillus thermodenitrificans (strain NG80-2).